Here is a 444-residue protein sequence, read N- to C-terminus: Trigger factor (444 aa).

In terms of domain architecture, PPIase FKBP-type spans 163–248 (GDIAVIDSPV…VKELRKNVPA (86 aa)).

This sequence belongs to the FKBP-type PPIase family. Tig subfamily.

It is found in the cytoplasm. It carries out the reaction [protein]-peptidylproline (omega=180) = [protein]-peptidylproline (omega=0). Involved in protein export. Acts as a chaperone by maintaining the newly synthesized protein in an open conformation. Functions as a peptidyl-prolyl cis-trans isomerase. The sequence is that of Trigger factor (tig) from Azospirillum brasilense.